We begin with the raw amino-acid sequence, 134 residues long: Flagellar basal-body rod protein FlgC (134 aa).

The protein belongs to the flagella basal body rod proteins family. In terms of assembly, the basal body constitutes a major portion of the flagellar organelle and consists of four rings (L,P,S, and M) mounted on a central rod. The rod consists of about 26 subunits of FlgG in the distal portion, and FlgB, FlgC and FlgF are thought to build up the proximal portion of the rod with about 6 subunits each.

The protein localises to the bacterial flagellum basal body. The sequence is that of Flagellar basal-body rod protein FlgC (flgC) from Salmonella typhi.